The following is a 279-amino-acid chain: Tryptophan synthase alpha chain (279 aa).

Catalysis depends on proton acceptor residues Glu50 and Asp61.

Belongs to the TrpA family. In terms of assembly, tetramer of two alpha and two beta chains.

It carries out the reaction (1S,2R)-1-C-(indol-3-yl)glycerol 3-phosphate + L-serine = D-glyceraldehyde 3-phosphate + L-tryptophan + H2O. It participates in amino-acid biosynthesis; L-tryptophan biosynthesis; L-tryptophan from chorismate: step 5/5. Functionally, the alpha subunit is responsible for the aldol cleavage of indoleglycerol phosphate to indole and glyceraldehyde 3-phosphate. The chain is Tryptophan synthase alpha chain from Brucella abortus (strain S19).